Reading from the N-terminus, the 124-residue chain is Membrane magnesium transporter 2 (124 aa).

Residue M1 is a topological domain, cytoplasmic. A helical transmembrane segment spans residues 2–22; it reads VAWLWKVLVGVGLSALAHAAF. The Lumenal portion of the chain corresponds to 23–44; that stretch reads SAAQHRSHTRLAEMKYEPLPTD. A helical membrane pass occupies residues 45–65; that stretch reads IVLQTLLAFALTCYGVVHTAG. Topologically, residues 66–124 are cytoplasmic; it reads DFRDRDATSELKNVTFDTLRNRPSFYVFQHSGSSLLQPSDTTRSSNLNVPSSDDIRLKF.

It belongs to the membrane magnesium transporter (TC 1.A.67) family.

Its subcellular location is the golgi apparatus membrane. The protein localises to the early endosome membrane. In terms of biological role, mediates Mg(2+) transport. This chain is Membrane magnesium transporter 2, found in Rattus norvegicus (Rat).